The sequence spans 278 residues: Putative carbamate hydrolase RutD (278 aa).

Belongs to the AB hydrolase superfamily. Hydrolase RutD family.

The catalysed reaction is carbamate + 2 H(+) = NH4(+) + CO2. Its function is as follows. Involved in pyrimidine catabolism. May facilitate the hydrolysis of carbamate, a reaction that can also occur spontaneously. The sequence is that of Putative carbamate hydrolase RutD from Yersinia enterocolitica serotype O:8 / biotype 1B (strain NCTC 13174 / 8081).